Reading from the N-terminus, the 50-residue chain is MAQKKASLACVECGSRNYSIGVSSTPKPTRLEVNKFCKYCKTYTLHKETR.

Belongs to the bacterial ribosomal protein bL33 family.

In Streptococcus pyogenes serotype M1, this protein is Large ribosomal subunit protein bL33B.